An 815-amino-acid chain; its full sequence is MKFTLSWLKQFLEISASVTEIAEALTDIGLEVEEVIDKSKELQKFEVAYIRNIKPHPSADKLKLCDVETKNGILQIVCGASNVRADIKVVLANIGIEIPKGNLKIKESVIRGQKSYGMLCSEEELLLSSNSDGIIELPKDAVVGDNFTKYYGLDDPIFVINVTPNRGDVLGVYGIARDLSAKGLGTLKELELSEIKSTFFSKIKLNVHDKEACPLFTFREIRNLKNKPSPNWLQQLLKNVGIKTISSLVDVTNYISHSFGQPIHAYDADKIYGGISVDCYIRSDKVISCKNHEMATAVLQFSNDSANFYAINGKGYLLTENDLAIKDESGIQGLAGIIGGAKSSCNDSTTNVILEAACFNAKMVAASGRRLKIDTDARYRNERNIDRNFTEKALNIATNLILSICGNCEVSEVVKVGEQEPQKKPLDFSVYFLEKITGIKLSIQEIEDILNKLGFITDVKGDIIKVIAPSWRHDINILEDIAEEIVRIYGYDKIESIKLPELYQNNNLREYKRISSFKRILASKGYDEVVTNSFMSSEDAKLFAELKEGLFLLNPMSIEENYMRPTVLPNLISIVSKNLARDVKDMAFFEVGPSFVNLNIESTYLTAIISGAFNNKNPHSFGRNYDIFDIKGDLEQVIEYAGLSLDKCIVIDETVLPQYYHPTRAINIRLGKNLLGHFGQIHPKILKYYDINQEIFAFELNITNLPLIKAKFGKRDEFTVSDYQANFRDYSFIVDQDHKVGEIISYIKNFNKKLVKSVMLFDIYSGDKLPEGKKSIAIKIKLQADDRTLSETDLNSFSEDLVASISQKFQGILRE.

Residues 39 to 148 (SKELQKFEVA…KDAVVGDNFT (110 aa)) enclose the tRNA-binding domain. Residues 421-496 (PQKKPLDFSV…RIYGYDKIES (76 aa)) form the B5 domain. Mg(2+) contacts are provided by aspartate 474, aspartate 480, glutamate 483, and glutamate 484. One can recognise an FDX-ACB domain in the interval 721–814 (SDYQANFRDY…ISQKFQGILR (94 aa)).

The protein belongs to the phenylalanyl-tRNA synthetase beta subunit family. Type 1 subfamily. As to quaternary structure, tetramer of two alpha and two beta subunits. The cofactor is Mg(2+).

Its subcellular location is the cytoplasm. It carries out the reaction tRNA(Phe) + L-phenylalanine + ATP = L-phenylalanyl-tRNA(Phe) + AMP + diphosphate + H(+). This chain is Phenylalanine--tRNA ligase beta subunit (pheT), found in Rickettsia prowazekii (strain Madrid E).